A 132-amino-acid polypeptide reads, in one-letter code: Translation initiation factor 5A (132 aa).

Hypusine is present on lysine 36.

The protein belongs to the eIF-5A family.

The protein localises to the cytoplasm. Its function is as follows. Functions by promoting the formation of the first peptide bond. The sequence is that of Translation initiation factor 5A (eIF5A) from Pyrobaculum arsenaticum (strain DSM 13514 / JCM 11321 / PZ6).